We begin with the raw amino-acid sequence, 247 residues long: Adenosylcobinamide-GDP ribazoletransferase (247 aa).

6 helical membrane-spanning segments follow: residues 31-51 (ILFY…VTCI), 55-75 (LPAL…TGGL), 109-129 (IGVL…YVLI), 135-155 (LFLI…FLTT), 183-203 (VLLL…SFLI), and 227-247 (AIEI…FYLV).

The protein belongs to the CobS family. Mg(2+) is required as a cofactor.

It localises to the cell inner membrane. It catalyses the reaction alpha-ribazole + adenosylcob(III)inamide-GDP = adenosylcob(III)alamin + GMP + H(+). The enzyme catalyses alpha-ribazole 5'-phosphate + adenosylcob(III)inamide-GDP = adenosylcob(III)alamin 5'-phosphate + GMP + H(+). The protein operates within cofactor biosynthesis; adenosylcobalamin biosynthesis; adenosylcobalamin from cob(II)yrinate a,c-diamide: step 7/7. In terms of biological role, joins adenosylcobinamide-GDP and alpha-ribazole to generate adenosylcobalamin (Ado-cobalamin). Also synthesizes adenosylcobalamin 5'-phosphate from adenosylcobinamide-GDP and alpha-ribazole 5'-phosphate. In Acinetobacter baumannii (strain ACICU), this protein is Adenosylcobinamide-GDP ribazoletransferase.